A 1040-amino-acid polypeptide reads, in one-letter code: MATEQQDSQLCLATILEDFLKQRNIQVSVGVDSSSLKKADETFGGRDLPVDPSDLRRYEAARWVRNTLGVVGGRDLPADPSEEDFRIALRSGILLCNVLNRVKPGAVPKVVEAPNDPLVNQDGAALSAFQYFENLRNFLVFVEEMGIPTFEVSDFEKGGKSARIVECVLALKSYREWKQSGGSGTWRYILNSKPTTFGIAKQYKRKDSEVPVDAVTNSPSSTPSSEQPLLDQSDSNTKNDGTASSIDAIVRAVFSDMKQEDIPVIVEDMLKSVMVEYERRLATQNELLLMSAGNRDKLGSGDLGRTISGNEETLSDASYGEENVTEIVNNNMEASQDSNVEELENQDYELYAISKEKTEKQQLIIERQQTHTEELKHDLKAVKAGLSLLQMKYQQEFTSLGKHLHGLTYAATGYQRVLEENRKLYNQVQDLKGSIRVYCRVRPFLPGQKSVLTTVDHLEDSTLSIATPSKYGKEGQKTFTFNKVFGPSASQEAVFADTQPLIRSVLDGYNVCIFAYGQTGSGKTFTMMGPNELTDETLGVNYRALSDLFHLSSVRKETFSYNISVQMLEIYNEQVRDLLATNEIRNSTQDGINVPEATLVPVSTTSDVIHLMNIGQKNRAVSATAMNDRSSRSHSCLTVHVQGKDLTSGVTLRGSMHLVDLAGSERIDKSEVTGDRLKEAQHINKSLSALGDVIASLSQKNNHIPYRNSKLTQLLQDALGGQAKTLMFIHISPELEDLGETLSTLKFAERVATVDLGAARVNKDTSEVKELKEQIASLKLALARKESGADQTQLQRPLTPDKLLRKKSLGVSSSFSKSANSTRQVQTKHKPSQIDDVNSIEGQSDSASSLDLQGLVGSPSWKTPPRDGKEEDMEFIIPGSEWVDKHEDEITRSSKPENRAHTQLEKRTSSLKREATRGVDKNKCNSSVDKGLEVRKIPYEEEANESDETATSDCSETNLMWQLNVQVNMPRPASNGSSTKLKKNQSKISRVAAETRSMIPSLIPTPTRTLSLGAAISSPGQTSSRHNNSTVVVKKRQNPK.

Residues 54–176 (DLRRYEAARW…CVLALKSYRE (123 aa)) form the Calponin-homology (CH) domain. The tract at residues 208-242 (SEVPVDAVTNSPSSTPSSEQPLLDQSDSNTKNDGT) is disordered. Positions 215-242 (VTNSPSSTPSSEQPLLDQSDSNTKNDGT) are enriched in polar residues. A Kinesin motor domain is found at 434–754 (SIRVYCRVRP…LKFAERVATV (321 aa)). 517–524 (GQTGSGKT) contributes to the ATP binding site. Positions 761–796 (VNKDTSEVKELKEQIASLKLALARKESGADQTQLQR) form a coiled coil. A compositionally biased stretch (low complexity) spans 809 to 818 (LGVSSSFSKS). Disordered regions lie at residues 809 to 871 (LGVS…GKEE), 887 to 926 (EDEI…KCNS), and 969 to 1040 (MPRP…QNPK). The span at 840–851 (IEGQSDSASSLD) shows a compositional bias: polar residues. Residues 887–923 (EDEITRSSKPENRAHTQLEKRTSSLKREATRGVDKNK) show a composition bias toward basic and acidic residues. Over residues 1018-1031 (SPGQTSSRHNNSTV) the composition is skewed to polar residues.

It belongs to the TRAFAC class myosin-kinesin ATPase superfamily. Kinesin family. KIN-14 subfamily.

The protein is Kinesin-like protein KIN-14H of Arabidopsis thaliana (Mouse-ear cress).